The following is a 529-amino-acid chain: Protein PAT1 homolog 2 (529 aa).

The interval 153 to 183 (QILQQQQRWRRRRSPTARSVPAQKPWSREPA) is disordered.

The protein belongs to the PAT1 family. In terms of assembly, interacts with LSM1.

The protein resides in the cytoplasm. Its subcellular location is the nucleus. Functionally, RNA-binding protein that acts as a translational repressor. This is Protein PAT1 homolog 2 (Patl2) from Mus musculus (Mouse).